The following is a 52-amino-acid chain: uncharacterized protein (52 aa).

Helical transmembrane passes span Ile-4–Glu-24 and Met-25–Val-45.

It is found in the cell membrane. This is an uncharacterized protein from Bacillus subtilis (strain 168).